A 216-amino-acid chain; its full sequence is GTP cyclohydrolase 1 (216 aa).

Residues cysteine 109, histidine 112, and cysteine 180 each contribute to the Zn(2+) site.

This sequence belongs to the GTP cyclohydrolase I family. As to quaternary structure, homomer.

It catalyses the reaction GTP + H2O = 7,8-dihydroneopterin 3'-triphosphate + formate + H(+). The protein operates within cofactor biosynthesis; 7,8-dihydroneopterin triphosphate biosynthesis; 7,8-dihydroneopterin triphosphate from GTP: step 1/1. The chain is GTP cyclohydrolase 1 from Tolumonas auensis (strain DSM 9187 / NBRC 110442 / TA 4).